A 658-amino-acid chain; its full sequence is UvrABC system protein B (658 aa).

The region spanning Lys-25–Ile-414 is the Helicase ATP-binding domain. Gly-38–Thr-45 lines the ATP pocket. The Beta-hairpin motif lies at His-91–Ile-114. Positions Gln-433–Arg-607 constitute a Helicase C-terminal domain. One can recognise a UVR domain in the interval Glu-623 to Leu-658.

This sequence belongs to the UvrB family. As to quaternary structure, forms a heterotetramer with UvrA during the search for lesions. Interacts with UvrC in an incision complex.

It localises to the cytoplasm. In terms of biological role, the UvrABC repair system catalyzes the recognition and processing of DNA lesions. A damage recognition complex composed of 2 UvrA and 2 UvrB subunits scans DNA for abnormalities. Upon binding of the UvrA(2)B(2) complex to a putative damaged site, the DNA wraps around one UvrB monomer. DNA wrap is dependent on ATP binding by UvrB and probably causes local melting of the DNA helix, facilitating insertion of UvrB beta-hairpin between the DNA strands. Then UvrB probes one DNA strand for the presence of a lesion. If a lesion is found the UvrA subunits dissociate and the UvrB-DNA preincision complex is formed. This complex is subsequently bound by UvrC and the second UvrB is released. If no lesion is found, the DNA wraps around the other UvrB subunit that will check the other stand for damage. This Helicobacter pylori (strain ATCC 700392 / 26695) (Campylobacter pylori) protein is UvrABC system protein B.